The primary structure comprises 215 residues: Probable phosphoglycerate mutase GpmB (215 aa).

Substrate contacts are provided by residues 8-15 (RHGETQWN), 21-22 (QG), arginine 58, arginine 60, 82-85 (ELNM), 104-105 (RR), and 151-152 (GI). Catalysis depends on histidine 9, which acts as the Tele-phosphohistidine intermediate. Residue glutamate 82 is the Proton donor/acceptor of the active site.

This sequence belongs to the phosphoglycerate mutase family. GpmB subfamily.

It catalyses the reaction (2R)-2-phosphoglycerate = (2R)-3-phosphoglycerate. Its pathway is carbohydrate degradation; glycolysis; pyruvate from D-glyceraldehyde 3-phosphate: step 3/5. This chain is Probable phosphoglycerate mutase GpmB, found in Shigella boydii serotype 18 (strain CDC 3083-94 / BS512).